The primary structure comprises 335 residues: UPF0353 protein NFA_34780 (335 aa).

The next 2 helical transmembrane spans lie at 8 to 28 (ALIWLGFLAVVALIALGYVLV) and 61 to 81 (IALMLVGLVFLTIAAAGPTSV). A VWFA domain is found at 90–295 (TVVLVMDVSL…EELTAVYDTL (206 aa)). Residues 310–330 (RPWLLLGMLVVAAGIVTGLLY) form a helical membrane-spanning segment.

This sequence belongs to the UPF0353 family.

The protein localises to the cell membrane. This Nocardia farcinica (strain IFM 10152) protein is UPF0353 protein NFA_34780.